The primary structure comprises 49 residues: Large ribosomal subunit protein bL33B (49 aa).

It belongs to the bacterial ribosomal protein bL33 family.

Plays a role in sporulation at high temperatures. This chain is Large ribosomal subunit protein bL33B (rpmGB), found in Bacillus subtilis (strain 168).